A 335-amino-acid chain; its full sequence is Nod factor export ATP-binding protein I (335 aa).

The region spanning 37–267 (IDVASVTKSY…KIGCQVIEIY (231 aa)) is the ABC transporter domain. 69-76 (GPNGAGKS) serves as a coordination point for ATP.

The protein belongs to the ABC transporter superfamily. Lipooligosaccharide exporter (TC 3.A.1.102) family. In terms of assembly, the complex is composed of two ATP-binding proteins (NodI) and two transmembrane proteins (NodJ).

It localises to the cell inner membrane. In terms of biological role, part of the ABC transporter complex NodIJ involved in the export of the nodulation factors (Nod factors), the bacterial signal molecules that induce symbiosis and subsequent nodulation induction. Nod factors are LCO (lipo-chitin oligosaccharide), a modified beta-1,4-linked N-acetylglucosamine oligosaccharide. This subunit is responsible for energy coupling to the transport system. The chain is Nod factor export ATP-binding protein I from Rhizobium meliloti (strain 1021) (Ensifer meliloti).